A 424-amino-acid polypeptide reads, in one-letter code: Histidine--tRNA ligase (424 aa).

This sequence belongs to the class-II aminoacyl-tRNA synthetase family. As to quaternary structure, homodimer.

Its subcellular location is the cytoplasm. The catalysed reaction is tRNA(His) + L-histidine + ATP = L-histidyl-tRNA(His) + AMP + diphosphate + H(+). This Shewanella piezotolerans (strain WP3 / JCM 13877) protein is Histidine--tRNA ligase.